Here is a 208-residue protein sequence, read N- to C-terminus: Small ribosomal subunit protein uS4 (208 aa).

An S4 RNA-binding domain is found at 98 to 163; that stretch reads RRLDNVVYRL…KPRFIEIKEK (66 aa).

This sequence belongs to the universal ribosomal protein uS4 family. In terms of assembly, part of the 30S ribosomal subunit. Contacts protein S5. The interaction surface between S4 and S5 is involved in control of translational fidelity.

Its function is as follows. One of the primary rRNA binding proteins, it binds directly to 16S rRNA where it nucleates assembly of the body of the 30S subunit. With S5 and S12 plays an important role in translational accuracy. The protein is Small ribosomal subunit protein uS4 of Caldicellulosiruptor saccharolyticus (strain ATCC 43494 / DSM 8903 / Tp8T 6331).